Reading from the N-terminus, the 395-residue chain is Chaperone protein DnaJ 2 (395 aa).

In terms of domain architecture, J spans 10–75 (DYYADLGVSK…TKRREYDDLK (66 aa)). A CR-type zinc finger spans residues 165–242 (GTTIPVELTG…CRGRGTVRRT (78 aa)). C178, C181, C194, C197, C216, C219, C230, and C233 together coordinate Zn(2+). CXXCXGXG motif repeat units lie at residues 178–185 (CNTCHGSG), 194–201 (CGQCNGSG), 216–223 (CTNCGGTG), and 230–237 (CVDCRGRG).

This sequence belongs to the DnaJ family. As to quaternary structure, homodimer. Zn(2+) is required as a cofactor.

It localises to the cytoplasm. Functionally, participates actively in the response to hyperosmotic and heat shock by preventing the aggregation of stress-denatured proteins and by disaggregating proteins, also in an autonomous, DnaK-independent fashion. Unfolded proteins bind initially to DnaJ; upon interaction with the DnaJ-bound protein, DnaK hydrolyzes its bound ATP, resulting in the formation of a stable complex. GrpE releases ADP from DnaK; ATP binding to DnaK triggers the release of the substrate protein, thus completing the reaction cycle. Several rounds of ATP-dependent interactions between DnaJ, DnaK and GrpE are required for fully efficient folding. Also involved, together with DnaK and GrpE, in the DNA replication of plasmids through activation of initiation proteins. The protein is Chaperone protein DnaJ 2 of Corynebacterium efficiens (strain DSM 44549 / YS-314 / AJ 12310 / JCM 11189 / NBRC 100395).